A 411-amino-acid chain; its full sequence is Arginine biosynthesis bifunctional protein ArgJ (411 aa).

Residues Thr-160, Lys-186, Thr-197, Glu-283, Asn-406, and Thr-411 each contribute to the substrate site. The Nucleophile role is filled by Thr-197.

It belongs to the ArgJ family. In terms of assembly, heterotetramer of two alpha and two beta chains.

The protein localises to the cytoplasm. The enzyme catalyses N(2)-acetyl-L-ornithine + L-glutamate = N-acetyl-L-glutamate + L-ornithine. It catalyses the reaction L-glutamate + acetyl-CoA = N-acetyl-L-glutamate + CoA + H(+). It functions in the pathway amino-acid biosynthesis; L-arginine biosynthesis; L-ornithine and N-acetyl-L-glutamate from L-glutamate and N(2)-acetyl-L-ornithine (cyclic): step 1/1. Its pathway is amino-acid biosynthesis; L-arginine biosynthesis; N(2)-acetyl-L-ornithine from L-glutamate: step 1/4. Feedback inhibition by L-ornithine. Functionally, catalyzes two activities which are involved in the cyclic version of arginine biosynthesis: the synthesis of N-acetylglutamate from glutamate and acetyl-CoA as the acetyl donor, and of ornithine by transacetylation between N(2)-acetylornithine and glutamate. In Halalkalibacterium halodurans (strain ATCC BAA-125 / DSM 18197 / FERM 7344 / JCM 9153 / C-125) (Bacillus halodurans), this protein is Arginine biosynthesis bifunctional protein ArgJ.